The primary structure comprises 293 residues: Pyridoxal 5'-phosphate synthase subunit PdxS (293 aa).

A D-ribose 5-phosphate-binding site is contributed by D23. The active-site Schiff-base intermediate with D-ribose 5-phosphate is K80. G152 contacts D-ribose 5-phosphate. R164 is a D-glyceraldehyde 3-phosphate binding site. Residues G213 and 234-235 (GS) contribute to the D-ribose 5-phosphate site.

The protein belongs to the PdxS/SNZ family. As to quaternary structure, in the presence of PdxT, forms a dodecamer of heterodimers.

It catalyses the reaction aldehydo-D-ribose 5-phosphate + D-glyceraldehyde 3-phosphate + L-glutamine = pyridoxal 5'-phosphate + L-glutamate + phosphate + 3 H2O + H(+). The protein operates within cofactor biosynthesis; pyridoxal 5'-phosphate biosynthesis. In terms of biological role, catalyzes the formation of pyridoxal 5'-phosphate from ribose 5-phosphate (RBP), glyceraldehyde 3-phosphate (G3P) and ammonia. The ammonia is provided by the PdxT subunit. Can also use ribulose 5-phosphate and dihydroxyacetone phosphate as substrates, resulting from enzyme-catalyzed isomerization of RBP and G3P, respectively. This chain is Pyridoxal 5'-phosphate synthase subunit PdxS, found in Dehalococcoides mccartyi (strain ATCC BAA-2266 / KCTC 15142 / 195) (Dehalococcoides ethenogenes (strain 195)).